Reading from the N-terminus, the 934-residue chain is Phosphoenolpyruvate carboxylase (934 aa).

Catalysis depends on residues H161 and K593.

It belongs to the PEPCase type 1 family. It depends on Mg(2+) as a cofactor.

The catalysed reaction is oxaloacetate + phosphate = phosphoenolpyruvate + hydrogencarbonate. Forms oxaloacetate, a four-carbon dicarboxylic acid source for the tricarboxylic acid cycle. The polypeptide is Phosphoenolpyruvate carboxylase (ppc) (Mycobacterium leprae (strain TN)).